The chain runs to 481 residues: Ribosomal RNA small subunit methyltransferase F (481 aa).

S-adenosyl-L-methionine contacts are provided by residues 119–125 (ASAPGSK), Glu143, Asp170, and Asp188. Catalysis depends on Cys241, which acts as the Nucleophile.

Belongs to the class I-like SAM-binding methyltransferase superfamily. RsmB/NOP family.

It is found in the cytoplasm. It carries out the reaction cytidine(1407) in 16S rRNA + S-adenosyl-L-methionine = 5-methylcytidine(1407) in 16S rRNA + S-adenosyl-L-homocysteine + H(+). In terms of biological role, specifically methylates the cytosine at position 1407 (m5C1407) of 16S rRNA. This is Ribosomal RNA small subunit methyltransferase F from Shewanella sp. (strain MR-4).